A 1508-amino-acid chain; its full sequence is Pleiotropic ABC efflux transporter of multiple drugs CDR1 (1508 aa).

Positions 1-30 (MSEKPFVDAPPPEDGVAHQVSPHDNGSLSE) are disordered. Residues 1–524 (MSEKPFVDAP…NFLRMKGDPS (524 aa)) lie on the Cytoplasmic side of the membrane. The 251-residue stretch at 165-415 (DYWHDMRKID…FLDMGYECPQ (251 aa)) folds into the ABC transporter 1 domain. A helical membrane pass occupies residues 525-545 (IVIFSIFGQGVMGLILSSVFY). Residues 546-559 (NLQPTTGSFYYRGA) are Extracellular-facing. The helical transmembrane segment at 560 to 580 (AMFFAVLFNAFASLLEIMSLF) threads the bilayer. Over 581 to 608 (EARPIVEKHKKYALYRPSADALASIISE) the chain is Cytoplasmic. The helical transmembrane segment at 609–629 (LPVKLCMSTCFNFSFYFMVHF) threads the bilayer. Residues 630 to 633 (RRDP) lie on the Extracellular side of the membrane. A helical membrane pass occupies residues 634–654 (GRFFFYWLFCGLCTLCMSHMF). At 655 to 673 (RSLGAVSTSLAAAMTPATS) the chain is on the cytoplasmic side. The chain crosses the membrane as a helical span at residues 674-694 (VLLAMVIFTGFVIPIPSMLGW). Residues 695–775 (CRWIQYINPV…EYVNAHKWRN (81 aa)) lie on the Extracellular side of the membrane. Residues 776 to 796 (LGIVVAYIVVFLGVYIALTEF) traverse the membrane as a helical segment. Topologically, residues 797–1203 (NKGAMQKGEI…TFQQYWRSPG (407 aa)) are cytoplasmic. The tract at residues 839–860 (KISYSDAMEKDSGESSTSDDKL) is disordered. Over residues 845–860 (AMEKDSGESSTSDDKL) the composition is skewed to basic and acidic residues. Residues 867–1110 (FHWKDLTYQV…GLIDYFEKHG (244 aa)) enclose the ABC transporter 2 domain. Residue 903–910 (GASGAGKT) coordinates ATP. The chain crosses the membrane as a helical span at residues 1204 to 1224 (YIYSKFFLVITASLFNGFAFF). The Extracellular portion of the chain corresponds to 1225–1239 (HSGTSQQGLQNQMFS). The chain crosses the membrane as a helical span at residues 1240-1260 (MFMFYMPLQTLIQQMLPYYVM). The Cytoplasmic portion of the chain corresponds to 1261–1288 (QREIYEVREAPSRTFSWFAFIASQITTE). The chain crosses the membrane as a helical span at residues 1289 to 1309 (IPFQVVLGTVAFFCWYYPVGL). At 1310–1326 (YQNATPTDTVHERGALM) the chain is on the extracellular side. Residues 1327-1347 (WLLVTAFYVYTISLGQMVVAF) traverse the membrane as a helical segment. Over 1348–1362 (MEIADNAANMVNLMF) the chain is Cytoplasmic. The chain crosses the membrane as a helical span at residues 1363–1383 (IMCLNFCGVLATPEALPGFWI). Over 1384–1475 (FMYRCNPFTY…HAVYSERWRN (92 aa)) the chain is Extracellular. Residues 1476-1496 (FGIFIAFIAINMIGTIFFYWL) form a helical membrane-spanning segment. Over 1497 to 1508 (ARVPKSSKSKNH) the chain is Cytoplasmic.

Belongs to the ABC transporter superfamily.

The protein localises to the cell membrane. It catalyses the reaction fluconazole(in) + ATP + H2O = fluconazole(out) + ADP + phosphate + H(+). The enzyme catalyses itraconazole(in) + ATP + H2O = itraconazole(out) + ADP + phosphate + H(+). The catalysed reaction is voriconazole(in) + ATP + H2O = voriconazole(out) + ADP + phosphate + H(+). Its activity is regulated as follows. The bis-benzodioxolylindolinone azoffluxin acts as an inhibitor of the transporter activity. Clorgyline analogs M19 and M25 inhibit the transcporter activity by uncoupling CDR1 ATPase activity from the active transport of substrates. Activity is also inhibited by beauvericin and oligomycin. Pleiotropic ABC efflux transporter that confers resistance to numerous chemicals including itraconazole, fluconazole, voriconazole and posaconazole. This chain is Pleiotropic ABC efflux transporter of multiple drugs CDR1, found in Candidozyma auris (Yeast).